Reading from the N-terminus, the 113-residue chain is U11-theraphotoxin-Hhn1a (113 aa).

The signal sequence occupies residues 1–21 (MNTVRVTFLLVFVLAVSLGRA). The propeptide occupies 22 to 74 (DKDENRMEMQEKTEQGKSYLDFAENLLLQKLEELEAKLLEEDSEESRNSRQKR). 3 disulfides stabilise this stretch: C75/C90, C82/C95, and C89/C110.

Belongs to the neurotoxin 14 (magi-1) family. 01 (HNTX-16) subfamily. In terms of tissue distribution, expressed by the venom gland.

Its subcellular location is the secreted. Probable ion channel inhibitor. The protein is U11-theraphotoxin-Hhn1a of Cyriopagopus hainanus (Chinese bird spider).